The following is a 239-amino-acid chain: Putative 3-methyladenine DNA glycosylase (239 aa).

The protein belongs to the DNA glycosylase MPG family.

This chain is Putative 3-methyladenine DNA glycosylase, found in Pseudomonas aeruginosa (strain ATCC 15692 / DSM 22644 / CIP 104116 / JCM 14847 / LMG 12228 / 1C / PRS 101 / PAO1).